Consider the following 308-residue polypeptide: Sulfate adenylyltransferase subunit 2 (308 aa).

The tract at residues R286–F308 is disordered.

Belongs to the PAPS reductase family. CysD subfamily. In terms of assembly, heterodimer composed of CysD, the smaller subunit, and CysN.

The enzyme catalyses sulfate + ATP + H(+) = adenosine 5'-phosphosulfate + diphosphate. It participates in sulfur metabolism; hydrogen sulfide biosynthesis; sulfite from sulfate: step 1/3. With CysN forms the ATP sulfurylase (ATPS) that catalyzes the adenylation of sulfate producing adenosine 5'-phosphosulfate (APS) and diphosphate, the first enzymatic step in sulfur assimilation pathway. APS synthesis involves the formation of a high-energy phosphoric-sulfuric acid anhydride bond driven by GTP hydrolysis by CysN coupled to ATP hydrolysis by CysD. This Nocardia farcinica (strain IFM 10152) protein is Sulfate adenylyltransferase subunit 2.